The primary structure comprises 268 residues: Orotidine 5'-phosphate decarboxylase (268 aa).

Residues aspartate 37, 59–61 (KTH), 91–100 (DRKFADIGNT), tyrosine 217, and arginine 235 each bind substrate. Lysine 93 acts as the Proton donor in catalysis.

This sequence belongs to the OMP decarboxylase family.

It carries out the reaction orotidine 5'-phosphate + H(+) = UMP + CO2. It functions in the pathway pyrimidine metabolism; UMP biosynthesis via de novo pathway; UMP from orotate: step 2/2. The polypeptide is Orotidine 5'-phosphate decarboxylase (URA4) (Maudiozyma exigua (Yeast)).